Consider the following 78-residue polypeptide: Ubiquinol-cytochrome-c reductase complex assembly factor 3 (78 aa).

The Mitochondrial matrix segment spans residues 1 to 5; sequence MSGMR. Residues 6 to 26 form a helical membrane-spanning segment; sequence ILTGSVALGGLTYAIWIIFSP. Residues 27 to 78 lie on the Mitochondrial intermembrane side of the membrane; sequence GEERKKEILKSLPEANPVRMEETRKRNAIMLQVLKDAAETNDNIARGFGSQK.

It belongs to the UQCC3 family. Associates with the ubiquinol-cytochrome c reductase complex (mitochondrial respiratory chain complex III or cytochrome b-c1 complex).

The protein resides in the mitochondrion inner membrane. Its function is as follows. Required for the assembly of the ubiquinol-cytochrome c reductase complex (mitochondrial respiratory chain complex III or cytochrome b-c1 complex), mediating cytochrome b recruitment and probably stabilization within the complex. Thereby, plays an important role in ATP production by mitochondria. Cardiolipin-binding protein, it may also control the cardiolipin composition of mitochondria membranes and their morphology. This chain is Ubiquinol-cytochrome-c reductase complex assembly factor 3, found in Danio rerio (Zebrafish).